The following is a 346-amino-acid chain: D-alanine--D-alanine ligase (346 aa).

The ATP-grasp domain maps to 133-327 (KLYAKSVGVK…ALADQISLEK (195 aa)). 159-211 (LSFPCIIKPARLGSSIGISIVKDEKDLEYAKDVGFEFDNDLVVEEFKNNIKEY) lines the ATP pocket. D284, E296, and N298 together coordinate Mg(2+).

This sequence belongs to the D-alanine--D-alanine ligase family. The cofactor is Mg(2+). It depends on Mn(2+) as a cofactor.

The protein resides in the cytoplasm. The enzyme catalyses 2 D-alanine + ATP = D-alanyl-D-alanine + ADP + phosphate + H(+). Its pathway is cell wall biogenesis; peptidoglycan biosynthesis. Functionally, cell wall formation. The protein is D-alanine--D-alanine ligase of Campylobacter jejuni subsp. jejuni serotype O:2 (strain ATCC 700819 / NCTC 11168).